The sequence spans 421 residues: 4-hydroxy-3-methylbut-2-en-1-yl diphosphate synthase (flavodoxin) (421 aa).

4 residues coordinate [4Fe-4S] cluster: cysteine 311, cysteine 314, cysteine 357, and glutamate 364.

The protein belongs to the IspG family. Requires [4Fe-4S] cluster as cofactor.

It carries out the reaction (2E)-4-hydroxy-3-methylbut-2-enyl diphosphate + oxidized [flavodoxin] + H2O + 2 H(+) = 2-C-methyl-D-erythritol 2,4-cyclic diphosphate + reduced [flavodoxin]. Its pathway is isoprenoid biosynthesis; isopentenyl diphosphate biosynthesis via DXP pathway; isopentenyl diphosphate from 1-deoxy-D-xylulose 5-phosphate: step 5/6. Its function is as follows. Converts 2C-methyl-D-erythritol 2,4-cyclodiphosphate (ME-2,4cPP) into 1-hydroxy-2-methyl-2-(E)-butenyl 4-diphosphate. This chain is 4-hydroxy-3-methylbut-2-en-1-yl diphosphate synthase (flavodoxin), found in Xanthomonas oryzae pv. oryzae (strain KACC10331 / KXO85).